Reading from the N-terminus, the 424-residue chain is MAIRARSSSYAAAAVALALALASVAAVAGEVFFQEKFEDGWESRWVKSEWKKDENMAGEWNHTSGKWNGDPEDKGIQTSEDYRFYAISAEYPEFSNKDKTLVLQFSVKHEQKLDCGGGYVKLLGGDVDQKKFGGDTPYSIMFGPDICGYSTKKVHTIFTKNDKNHLIKKDVPCETDQLSHVYTLIIHPDATYTILIDNVEKQSGSIYEHWDILPPKQIKDPEAKKPEDWDDKEYIPDPEDKKPEGYDDIPKEIPDPDAKKPEDWDDEEDGEWTAPTIPNPEYKGPWKQKKIKNPNYQGKWKAPMIDNPDFKDDPYIYAFDSLKYIGIELWQVKSGTLFDNFLITDDPELAKTFAEETWGKHKDAEKAAFDEAEKKKEEEEAAKAGEDDDDLDDEDAEDEDKADEKADSDAEDGKDSDDEKHDEL.

Positions 1–29 are cleaved as a signal peptide; that stretch reads MAIRARSSSYAAAAVALALALASVAAVAG. The N-linked (GlcNAc...) asparagine glycan is linked to Asn-61. A disulfide bridge connects residues Cys-115 and Cys-147. Residues Tyr-119, Lys-121, Tyr-138, and Asp-145 each contribute to the an alpha-D-glucoside site. 7 tandem repeats follow at residues 201-212, 220-231, 237-248, 255-266, 270-280, 284-294, and 298-308. Residues 201 to 266 are 4 X approximate repeats; it reads KQSGSIYEHW…DAKKPEDWDD (66 aa). Positions 217 to 262 are enriched in basic and acidic residues; the sequence is QIKDPEAKKPEDWDDKEYIPDPEDKKPEGYDDIPKEIPDPDAKKPE. The interval 217–289 is disordered; that stretch reads QIKDPEAKKP…PEYKGPWKQK (73 aa). The segment at 270–308 is 3 X approximate repeats; it reads GEWTAPTIPNPEYKGPWKQKKIKNPNYQGKWKAPMIDNP. An alpha-D-glucoside is bound at residue Glu-328. Residues 356–385 show a composition bias toward basic and acidic residues; it reads ETWGKHKDAEKAAFDEAEKKKEEEEAAKAG. The segment at 356–424 is disordered; it reads ETWGKHKDAE…DSDDEKHDEL (69 aa). The segment covering 386 to 401 has biased composition (acidic residues); that stretch reads EDDDDLDDEDAEDEDK. Residues 402-424 show a composition bias toward basic and acidic residues; it reads ADEKADSDAEDGKDSDDEKHDEL. Residues 421–424 carry the Prevents secretion from ER motif; the sequence is HDEL.

The protein belongs to the calreticulin family. Post-translationally, phosphorylated.

It localises to the endoplasmic reticulum lumen. In terms of biological role, molecular calcium-binding chaperone promoting folding, oligomeric assembly and quality control in the ER via the calreticulin/calnexin cycle. This lectin may interact transiently with almost all of the monoglucosylated glycoproteins that are synthesized in the ER. This Oryza sativa subsp. japonica (Rice) protein is Calreticulin.